The primary structure comprises 111 residues: Nucleoid-associated protein PputGB1_3833 (111 aa).

2 disordered regions span residues 1–25 and 87–111; these read MMKG…KMQE and EQSS…KMPF.

The protein belongs to the YbaB/EbfC family. Homodimer.

The protein resides in the cytoplasm. Its subcellular location is the nucleoid. In terms of biological role, binds to DNA and alters its conformation. May be involved in regulation of gene expression, nucleoid organization and DNA protection. The polypeptide is Nucleoid-associated protein PputGB1_3833 (Pseudomonas putida (strain GB-1)).